The sequence spans 287 residues: Lycopene elongase/hydratase (287 aa).

7 helical membrane passes run 15 to 35, 37 to 57, 97 to 117, 137 to 157, 166 to 186, 218 to 238, and 265 to 285; these read ISWV…AGEI, WLFW…MYGI, IPFL…WLTI, FIDA…GATI, MWIA…LGAV, LLAA…GIAI, and VFLW…IAIH.

Belongs to the UbiA prenyltransferase family.

It is found in the cell membrane. The catalysed reaction is all-trans-lycopene + dimethylallyl diphosphate + A + H2O = nonaflavuxanthin + AH2 + diphosphate. It catalyses the reaction nonaflavuxanthin + dimethylallyl diphosphate + A + H2O = flavuxanthin + AH2 + diphosphate. It participates in carotenoid biosynthesis. Its function is as follows. Catalyzes the elongation of the C(40) carotenoid all-trans-lycopene to the acyclic C(50) carotenoid flavuxanthin during decaprenoxanthin biosynthesis. Acts as a bifunctional enzyme that catalyzes the elongation of lycopene by attaching a C(5) isoprene unit at C-2, as well as the hydroxylation of the new isoprene unit. The enzyme acts at both ends of the substrate, forming the C(50) carotenoid flavuxanthin via the C(45) intermediate nonaflavuxanthin. This Corynebacterium glutamicum (Brevibacterium saccharolyticum) protein is Lycopene elongase/hydratase.